A 620-amino-acid polypeptide reads, in one-letter code: 1-deoxy-D-xylulose-5-phosphate synthase (620 aa).

Residues histidine 80 and 121 to 123 contribute to the thiamine diphosphate site; that span reads GHS. Position 152 (aspartate 152) interacts with Mg(2+). Thiamine diphosphate is bound by residues 153–154, asparagine 181, tyrosine 288, and glutamate 370; that span reads GA. Asparagine 181 serves as a coordination point for Mg(2+).

Belongs to the transketolase family. DXPS subfamily. In terms of assembly, homodimer. Requires Mg(2+) as cofactor. Thiamine diphosphate serves as cofactor.

It catalyses the reaction D-glyceraldehyde 3-phosphate + pyruvate + H(+) = 1-deoxy-D-xylulose 5-phosphate + CO2. It functions in the pathway metabolic intermediate biosynthesis; 1-deoxy-D-xylulose 5-phosphate biosynthesis; 1-deoxy-D-xylulose 5-phosphate from D-glyceraldehyde 3-phosphate and pyruvate: step 1/1. Functionally, catalyzes the acyloin condensation reaction between C atoms 2 and 3 of pyruvate and glyceraldehyde 3-phosphate to yield 1-deoxy-D-xylulose-5-phosphate (DXP). This chain is 1-deoxy-D-xylulose-5-phosphate synthase, found in Escherichia coli O157:H7.